The primary structure comprises 586 residues: Exocyst complex component EXO70A3 (586 aa).

N-linked (GlcNAc...) asparagine glycosylation is found at asparagine 65 and asparagine 106. Residues 119-149 (CLPSNLRPPSDDEGSDGKSHDPQSNGLGKTD) are disordered. A helical membrane pass occupies residues 258–278 (FAEITTISFGMLLSFGYAIAI). N-linked (GlcNAc...) asparagine glycosylation is found at asparagine 321 and asparagine 487.

The protein belongs to the EXO70 family. Subunit of the exocyst complex. Confined to the outer layer of the columella cells in the root tips of young seedlings.

It localises to the membrane. Functionally, component of the exocyst complex involved in the docking of exocytic vesicles with fusion sites on the plasma membrane during regulated or polarized secretion. Involved in PIN4 exocytosis and gravitropic responses in columella cells. By monitoring PIN4 distribution in columella cells, modulates auxin repartition and subsequently regulates the root system architecture (RSA), thus being a component of the auxin-dependent root directional growth (ARD). The sequence is that of Exocyst complex component EXO70A3 from Arabidopsis thaliana (Mouse-ear cress).